We begin with the raw amino-acid sequence, 1267 residues long: DNA-directed RNA polymerase subunit beta (1267 aa).

Belongs to the RNA polymerase beta chain family. As to quaternary structure, the RNAP catalytic core consists of 2 alpha, 1 beta, 1 beta' and 1 omega subunit. When a sigma factor is associated with the core the holoenzyme is formed, which can initiate transcription.

The catalysed reaction is RNA(n) + a ribonucleoside 5'-triphosphate = RNA(n+1) + diphosphate. In terms of biological role, DNA-dependent RNA polymerase catalyzes the transcription of DNA into RNA using the four ribonucleoside triphosphates as substrates. The sequence is that of DNA-directed RNA polymerase subunit beta (rpoB) from Carsonella ruddii (strain PV).